We begin with the raw amino-acid sequence, 87 residues long: Acyl-CoA-binding protein (87 aa).

Ser-2 is modified (N-acetylserine). The ACB domain maps to 2 to 87 (SQADFDKAAE…VEELKKKYGI (86 aa)). Residue Lys-8 is modified to N6-acetyllysine; alternate. The residue at position 8 (Lys-8) is an N6-succinyllysine; alternate. Lys-14 is a binding site for an acyl-CoA. The residue at position 17 (Lys-17) is an N6-succinyllysine. Position 29 is a phosphotyrosine (Tyr-29). Residues 29–33 (YSHFK), Lys-51, Lys-55, and Tyr-74 contribute to the an acyl-CoA site. N6-acetyllysine is present on Lys-51. Lys-55 is subject to N6-acetyllysine; alternate. Lys-55 is modified (N6-succinyllysine; alternate). N6-(2-hydroxyisobutyryl)lysine; alternate is present on Lys-55. At Lys-55 the chain carries N6-malonyllysine; alternate. N6-acetyllysine; alternate is present on Lys-77. Lys-77 is subject to N6-succinyllysine; alternate.

The protein belongs to the ACBP family. In terms of assembly, monomer.

The protein resides in the endoplasmic reticulum. Its subcellular location is the golgi apparatus. Its function is as follows. Binds medium- and long-chain acyl-CoA esters with very high affinity and may function as an intracellular carrier of acyl-CoA esters. It is also able to displace diazepam from the benzodiazepine (BZD) recognition site located on the GABA type A receptor. It is therefore possible that this protein also acts as a neuropeptide to modulate the action of the GABA receptor. The sequence is that of Acyl-CoA-binding protein (Dbi) from Rattus norvegicus (Rat).